The primary structure comprises 338 residues: MSDYSSLILRYWYSNQPSRWLLTPLSGLFQLAVKIRQWAYTQGLFHTHILPLPVLVIGNLTLGGTGKTPLVIWLAQFLRQHGYRPGLISRGYGGHAQNYPQQVYPDSDPHLVGDEAVLLARRTGCPLVVGPDRVAASHALLAHSDCNVLLSDDGLQHYALGRDIEILVVDGVRRFGNAHCLPAGPLREPLSRLRTVDLVVTNGMPQGGEFAMYSQLQDARHIKDGTLRPLKKFRRTKLHGVAGIGNPERFFSQLRALELTIQPHPFPDHYGFQSEDLAFADQQPVLMTEKDAVKCIRFARDNYWYVPMDVSLPASFGAQVLSLLQQAAKKKLNIETTG.

An ATP-binding site is contributed by 61–68; the sequence is TLGGTGKT.

Belongs to the LpxK family.

The catalysed reaction is a lipid A disaccharide + ATP = a lipid IVA + ADP + H(+). It functions in the pathway glycolipid biosynthesis; lipid IV(A) biosynthesis; lipid IV(A) from (3R)-3-hydroxytetradecanoyl-[acyl-carrier-protein] and UDP-N-acetyl-alpha-D-glucosamine: step 6/6. In terms of biological role, transfers the gamma-phosphate of ATP to the 4'-position of a tetraacyldisaccharide 1-phosphate intermediate (termed DS-1-P) to form tetraacyldisaccharide 1,4'-bis-phosphate (lipid IVA). The chain is Tetraacyldisaccharide 4'-kinase from Nitrosococcus oceani (strain ATCC 19707 / BCRC 17464 / JCM 30415 / NCIMB 11848 / C-107).